The sequence spans 388 residues: 4-hydroxycoumarin synthase 2 (388 aa).

Residue C159 is part of the active site.

The protein belongs to the thiolase-like superfamily. Chalcone/stilbene synthases family. As to quaternary structure, homodimer.

It catalyses the reaction 2-hydroxybenzoyl-CoA + malonyl-CoA = 4-hydroxycoumarin + CO2 + 2 CoA. In terms of biological role, type III polyketide synthase involved preferentially in the biosynthesis of 4-hydroxycoumarin from salicoyl-CoA. Can also use benzoyl-CoA and malonyl-CoA to produce 3,5-dihydroxybiphenyl as a major product and benzoyldiacetic acid lactone as a minor side product. Can also use m-hydroxybenzoyl-CoA as substrate, producing m-hydroxybenzoyl diacetic acid lactone as a derailment product. No activity with p-hydroxybenzoyl-CoA, CoA-linked cinnamic acids or acetyl-CoA. The chain is 4-hydroxycoumarin synthase 2 (BIS3) from Sorbus aucuparia (European mountain ash).